A 437-amino-acid polypeptide reads, in one-letter code: Protein farnesyltransferase subunit beta (437 aa).

PFTB repeat units lie at residues 123–164 (ATDV…CIIG), 174–215 (REKL…SLTN), 222–263 (FEGT…VILK), 270–312 (LKSL…PLLH), and 332–374 (QQAL…SIAQ). (2E,6E)-farnesyl diphosphate-binding positions include 248 to 251 (HGGY) and 291 to 294 (RCNK). The Zn(2+) site is built by D297 and C299. Position 300-303 (300-303 (YSFW)) interacts with (2E,6E)-farnesyl diphosphate. Residue H362 coordinates Zn(2+). Position 436 is a phosphothreonine (T436).

The protein belongs to the protein prenyltransferase subunit beta family. As to quaternary structure, heterodimer of FNTA and FNTB. Requires Zn(2+) as cofactor.

It carries out the reaction L-cysteinyl-[protein] + (2E,6E)-farnesyl diphosphate = S-(2E,6E)-farnesyl-L-cysteinyl-[protein] + diphosphate. In terms of biological role, essential subunit of the farnesyltransferase complex. Catalyzes the transfer of a farnesyl moiety from farnesyl diphosphate to a cysteine at the fourth position from the C-terminus of several proteins having the C-terminal sequence Cys-aliphatic-aliphatic-X. In Homo sapiens (Human), this protein is Protein farnesyltransferase subunit beta (FNTB).